The following is a 120-amino-acid chain: Holo-[acyl-carrier-protein] synthase (120 aa).

Mg(2+) is bound by residues Asp-8 and Glu-60.

The protein belongs to the P-Pant transferase superfamily. AcpS family. Mg(2+) is required as a cofactor.

It localises to the cytoplasm. The catalysed reaction is apo-[ACP] + CoA = holo-[ACP] + adenosine 3',5'-bisphosphate + H(+). Its function is as follows. Transfers the 4'-phosphopantetheine moiety from coenzyme A to a Ser of acyl-carrier-protein. The protein is Holo-[acyl-carrier-protein] synthase of Anaplasma marginale (strain St. Maries).